The sequence spans 836 residues: Protein IWS1 homolog A (836 aa).

The segment at 1 to 542 is disordered; it reads MEADNYSPEH…DMKSGKMGDY (542 aa). Basic and acidic residues-rich tracts occupy residues 20–36, 43–122, 133–148, 157–186, 206–218, 288–309, 370–386, and 458–469; these read QDER…EQRS, HQSE…DRSP, EPVR…DVPR, DERH…DKAP, DSKD…HAAS, VPVK…KASD, RSSE…KKLQ, and ERKSKTETKSAD. A compositionally biased stretch (acidic residues) spans 476 to 485; that stretch reads SDSENEEENL. Residues 533 to 542 are compositionally biased toward basic and acidic residues; the sequence is DMKSGKMGDY. The region spanning 631–709 is the TFIIS N-terminal domain; sequence SAIKEWLTPL…NEWSRPIFGL (79 aa). The interval 714 to 746 is disordered; sequence KGMTREEREQRDIEQMPQRRRMSSSGGQTPRRD. Over residues 716-727 the composition is skewed to basic and acidic residues; sequence MTREEREQRDIE.

Belongs to the IWS1 family.

It localises to the nucleus. Transcription factor which plays a key role in defining the composition of the RNA polymerase II (RNAPII) elongation complex and in modulating the production of mature mRNA transcripts. The sequence is that of Protein IWS1 homolog A (iws1-a) from Xenopus laevis (African clawed frog).